We begin with the raw amino-acid sequence, 61 residues long: 14-3-3-like protein (61 aa).

Belongs to the 14-3-3 family.

This chain is 14-3-3-like protein, found in Zea mays (Maize).